A 642-amino-acid polypeptide reads, in one-letter code: Threonine--tRNA ligase (642 aa).

A TGS domain is found at 1–61 (MPVIRFCDGS…TEDSSISFIS (61 aa)). The segment at 243-534 (DHRKIGKLLN…LIEEFSGKLP (292 aa)) is catalytic. 3 residues coordinate Zn(2+): Cys334, His385, and His511.

It belongs to the class-II aminoacyl-tRNA synthetase family. As to quaternary structure, homodimer. Requires Zn(2+) as cofactor.

It is found in the cytoplasm. The catalysed reaction is tRNA(Thr) + L-threonine + ATP = L-threonyl-tRNA(Thr) + AMP + diphosphate + H(+). In terms of biological role, catalyzes the attachment of threonine to tRNA(Thr) in a two-step reaction: L-threonine is first activated by ATP to form Thr-AMP and then transferred to the acceptor end of tRNA(Thr). Also edits incorrectly charged L-seryl-tRNA(Thr). The sequence is that of Threonine--tRNA ligase from Buchnera aphidicola subsp. Schizaphis graminum (strain Sg).